The primary structure comprises 323 residues: UDP-glucuronate 4-epimerase (323 aa).

11 to 13 is a binding site for NAD(+); it reads GFI. The active-site Proton acceptor is Tyr-152. Lys-156 is a binding site for NAD(+).

This sequence belongs to the NAD(P)-dependent epimerase/dehydratase family. NAD(+) serves as cofactor.

The enzyme catalyses UDP-alpha-D-glucuronate = UDP-alpha-D-galacturonate. Its function is as follows. Catalyzes the interconversion of UDP-D-glucuronic acid (UDP-GlcA) and UDP-D-galacturonic acid (UDP-GalA). This chain is UDP-glucuronate 4-epimerase, found in Thermodesulfobacterium geofontis (strain OPF15).